A 323-amino-acid polypeptide reads, in one-letter code: Thymidine kinase (323 aa).

Position 11–18 (11–18) interacts with ATP; it reads GPHGLGKT. The active-site Proton acceptor is Glu-36. Substrate-binding residues include Tyr-54 and Gln-78. Arg-169 lines the ATP pocket. Arg-175 is a substrate binding site.

This sequence belongs to the herpesviridae thymidine kinase family. As to quaternary structure, homodimer.

It catalyses the reaction thymidine + ATP = dTMP + ADP + H(+). In terms of biological role, catalyzes the transfer of the gamma-phospho group of ATP to thymidine to generate dTMP in the salvage pathway of pyrimidine synthesis. The dTMP serves as a substrate for DNA polymerase during viral DNA replication. Allows the virus to be reactivated and to grow in non-proliferative cells lacking a high concentration of phosphorylated nucleic acid precursors. The polypeptide is Thymidine kinase (Bos taurus (Bovine)).